A 629-amino-acid polypeptide reads, in one-letter code: 1-deoxy-D-xylulose-5-phosphate synthase (629 aa).

Residues His79 and 119–121 (SHA) each bind thiamine diphosphate. Position 150 (Asp150) interacts with Mg(2+). Thiamine diphosphate is bound by residues 151–152 (GS), Asn180, Tyr292, and Glu377. Residue Asn180 coordinates Mg(2+).

It belongs to the transketolase family. DXPS subfamily. In terms of assembly, homodimer. The cofactor is Mg(2+). Requires thiamine diphosphate as cofactor.

It carries out the reaction D-glyceraldehyde 3-phosphate + pyruvate + H(+) = 1-deoxy-D-xylulose 5-phosphate + CO2. Its pathway is metabolic intermediate biosynthesis; 1-deoxy-D-xylulose 5-phosphate biosynthesis; 1-deoxy-D-xylulose 5-phosphate from D-glyceraldehyde 3-phosphate and pyruvate: step 1/1. Catalyzes the acyloin condensation reaction between C atoms 2 and 3 of pyruvate and glyceraldehyde 3-phosphate to yield 1-deoxy-D-xylulose-5-phosphate (DXP). The chain is 1-deoxy-D-xylulose-5-phosphate synthase from Tropheryma whipplei (strain TW08/27) (Whipple's bacillus).